The sequence spans 132 residues: QTATQLLKVAHKYRPETKQEKKQRLLARAEKKAAXKGDVPTKRPPVLRAGVNTVTTLVENKKAQLVVIAHDVDPIELVVFLPALCRKMGVPYCIIKGKARLGRLVHRKTCTTVAFTQVNSEDKGALAKLVEA.

The residue at position 8 (Lys-8) is an N6-acetyllysine; alternate. Lys-8 is covalently cross-linked (Glycyl lysine isopeptide (Lys-Gly) (interchain with G-Cter in SUMO2); alternate). Lys-36 is covalently cross-linked (Glycyl lysine isopeptide (Lys-Gly) (interchain with G-Cter in SUMO2)). N6-acetyllysine is present on Lys-128.

It belongs to the eukaryotic ribosomal protein eL8 family. Component of the large ribosomal subunit. Interacts with CRY1. Interacts with DICER1, AGO2, TARBP2, MOV10 and EIF6; they form a large RNA-induced silencing complex (RISC).

The protein resides in the cytoplasm. Component of the large ribosomal subunit. The ribosome is a large ribonucleoprotein complex responsible for the synthesis of proteins in the cell. The chain is Large ribosomal subunit protein eL8 (RPL7A) from Sus scrofa (Pig).